A 187-amino-acid chain; its full sequence is Transmembrane protein 272 (187 aa).

4 helical membrane passes run Cys-21–Met-41, Leu-52–Leu-72, Ile-107–Phe-127, and Leu-149–Leu-169.

The protein resides in the membrane. The polypeptide is Transmembrane protein 272 (Homo sapiens (Human)).